The sequence spans 354 residues: MKEKLETLLAAIQPADQTLRQAIQAHLDDLTKPQGSLGRLEEIAQQYILATGQIHPSLPKKKICCFAGDHGVAAEGVSAFPAEVTPQMVYNMLHGGAAINVLSRHVGAELSVVDVGVNHDFADAPNLVQCKVKRGSANMAVGAAMSETETLQAILAGAELAFQAADAGYGLLGTGEMGIANTTPATALYAVLLNLPVEAITGRGTGIDDARLHHKIAVIERAIAVNAERCATPFGTLAALGGFEIAAITGFILGAAARRIPVVVDGFISSSGALVAMKMVPSVVDYLFFSHLSAEQGHGAVMEALGVRPMLSLDLRLGEGTGAALAMQLVDAALKIYNEMATFSGAQVSEKIEG.

Residue E319 is the Proton acceptor of the active site.

This sequence belongs to the CobT family.

The enzyme catalyses 5,6-dimethylbenzimidazole + nicotinate beta-D-ribonucleotide = alpha-ribazole 5'-phosphate + nicotinate + H(+). It functions in the pathway nucleoside biosynthesis; alpha-ribazole biosynthesis; alpha-ribazole from 5,6-dimethylbenzimidazole: step 1/2. In terms of biological role, catalyzes the synthesis of alpha-ribazole-5'-phosphate from nicotinate mononucleotide (NAMN) and 5,6-dimethylbenzimidazole (DMB). In Chlorobium chlorochromatii (strain CaD3), this protein is Nicotinate-nucleotide--dimethylbenzimidazole phosphoribosyltransferase.